We begin with the raw amino-acid sequence, 148 residues long: MNIELKLLNKEIIKEVPEYGTEGSAAVDLRACLSEAEFLSPGECKLIGTGIAINIANPNYAAMILPRSGLGHKKGLVLGNGTGLIDSDYQGELMVSCFNRSQEVIEIEPMMRFAQLVVVPVVQAKFDIVEEFSQRTIRSAGGFGHTGV.

Residues 67–69 (RSG), Asn-80, 84–86 (LID), and Met-94 each bind substrate.

This sequence belongs to the dUTPase family. Mg(2+) serves as cofactor.

It carries out the reaction dUTP + H2O = dUMP + diphosphate + H(+). It participates in pyrimidine metabolism; dUMP biosynthesis; dUMP from dCTP (dUTP route): step 2/2. Its function is as follows. This enzyme is involved in nucleotide metabolism: it produces dUMP, the immediate precursor of thymidine nucleotides and it decreases the intracellular concentration of dUTP so that uracil cannot be incorporated into DNA. This Francisella philomiragia subsp. philomiragia (strain ATCC 25017 / CCUG 19701 / FSC 153 / O#319-036) protein is Deoxyuridine 5'-triphosphate nucleotidohydrolase.